The primary structure comprises 40 residues: Natriuretic peptide PpNP-a (40 aa).

A propeptide spanning residues 1 to 8 (SGSKTANI) is cleaved from the precursor. The disordered stretch occupies residues 1 to 40 (SGSKTANIGDGCFGVPIDHIGSTSGMGCGSPRPKPTPGGS). The cysteines at positions 12 and 28 are disulfide-linked.

Belongs to the natriuretic peptide family. As to expression, expressed by the venom gland.

The protein localises to the secreted. Functionally, snake venom natriuretic peptide that targets both NPR1 and NPR2. Exhibits hypotensive and vasodepressor activities. The sequence is that of Natriuretic peptide PpNP-a from Pseudechis porphyriacus (Red-bellied black snake).